We begin with the raw amino-acid sequence, 326 residues long: Probable iron chelatin transport system permease protein jhp_0822 (326 aa).

The next 10 membrane-spanning stretches (helical) occupy residues Ile-7–Ser-27, Ile-64–Leu-84, Pro-91–Val-111, Ser-113–Met-133, Leu-142–Ile-162, Phe-164–Leu-184, Tyr-187–Leu-207, Val-241–Pro-261, Leu-275–Lys-295, and Asp-301–Phe-321.

This sequence belongs to the binding-protein-dependent transport system permease family. FecCD subfamily.

Its subcellular location is the cell inner membrane. Functionally, part of a binding-protein-dependent transport system for an iron chelatin; probably responsible for the translocation of the substrate across the membrane. The polypeptide is Probable iron chelatin transport system permease protein jhp_0822 (Helicobacter pylori (strain J99 / ATCC 700824) (Campylobacter pylori J99)).